We begin with the raw amino-acid sequence, 81 residues long: Large ribosomal subunit protein bL31B (81 aa).

It belongs to the bacterial ribosomal protein bL31 family. Type B subfamily. As to quaternary structure, part of the 50S ribosomal subunit.

The protein is Large ribosomal subunit protein bL31B of Listeria innocua serovar 6a (strain ATCC BAA-680 / CLIP 11262).